Reading from the N-terminus, the 502-residue chain is MSEQEVKELDLNGEMLVRREKLAALRAKGNAFPNKFRRDALAQDLHNQYDSEDGEILKEKSIEVQVAGRIMTRRAMGKATFITIQDMSSKIQLYVARDNLPEGVYKDDVGTWDLGDIVGVKGTLFKTKTDELTVKTTEVQLLTKALRPLPDKFHGLTDQEVRYRQRYLDLISNEESRRTFIIRSKVVAGIREYFISKGFMEVETPMLQVIPGGASARPFVTHHNALDVDMYLRIAPELYLKRLVVGGFERVFELNRNFRNEGVSVRHNPEFTMLEYYQAYADYHDLMDNTEELLRKLAIDILGTTIVKYGEYEFDFGKPFERITLHDATVKYGADKGIVKEDLYDFDRAKATAERLGIEVQKSWGLGSIVNAIFEEVAEHHLIQPTFLMAHPAEISPLARRNDENPDVTDRFELFIGGREIGNGFSELNDAEDQNERFDAQVAAKEAGDDEAMFKDEDFVVALEHGLPPTAGEGLGIDRLAMLYANAPSIRDVILFPAMRQK.

Positions 413 and 420 each coordinate Mg(2+).

It belongs to the class-II aminoacyl-tRNA synthetase family. Homodimer. Mg(2+) serves as cofactor.

It is found in the cytoplasm. The catalysed reaction is tRNA(Lys) + L-lysine + ATP = L-lysyl-tRNA(Lys) + AMP + diphosphate. This Haemophilus influenzae (strain 86-028NP) protein is Lysine--tRNA ligase.